We begin with the raw amino-acid sequence, 119 residues long: Beta-2-microglobulin (119 aa).

The signal sequence occupies residues 1–20 (MARFVVVPLLVLVSLFGLEA). The Ig-like C1-type domain occupies 25-114 (PKIQVYSRYP…VTFSTPKTVK (90 aa)). An intrachain disulfide couples cysteine 45 to cysteine 100.

It belongs to the beta-2-microglobulin family. Heterodimer of an alpha chain and a beta chain. Beta-2-microglobulin is the beta-chain of major histocompatibility complex class I molecules.

Its subcellular location is the secreted. Its function is as follows. Component of the class I major histocompatibility complex (MHC). Involved in the presentation of peptide antigens to the immune system. This Saguinus oedipus (Cotton-top tamarin) protein is Beta-2-microglobulin (B2M).